The sequence spans 438 residues: 23S rRNA (uracil(1939)-C(5))-methyltransferase RlmD (438 aa).

Residues 10–69 enclose the TRAM domain; that stretch reads KASVNTKHQSVDVVRLDHNGAGIAFVDKKPVFIEGALPGEKAIIQFIEQKKQFSRAKLIK. C82, C88, C91, and C169 together coordinate [4Fe-4S] cluster. Residues Q272, F301, N306, E322, N349, and D370 each contribute to the S-adenosyl-L-methionine site. Residue C396 is the Nucleophile of the active site.

It belongs to the class I-like SAM-binding methyltransferase superfamily. RNA M5U methyltransferase family. RlmD subfamily.

It carries out the reaction uridine(1939) in 23S rRNA + S-adenosyl-L-methionine = 5-methyluridine(1939) in 23S rRNA + S-adenosyl-L-homocysteine + H(+). Functionally, catalyzes the formation of 5-methyl-uridine at position 1939 (m5U1939) in 23S rRNA. This is 23S rRNA (uracil(1939)-C(5))-methyltransferase RlmD from Aliivibrio fischeri (strain ATCC 700601 / ES114) (Vibrio fischeri).